The following is a 149-amino-acid chain: 3-dehydroquinate dehydratase (149 aa).

Tyr-24 functions as the Proton acceptor in the catalytic mechanism. Residues Asn-76, His-82, and Asp-89 each coordinate substrate. Residue His-102 is the Proton donor of the active site. Residues 103–104 (LS) and Arg-113 each bind substrate.

This sequence belongs to the type-II 3-dehydroquinase family. In terms of assembly, homododecamer.

The catalysed reaction is 3-dehydroquinate = 3-dehydroshikimate + H2O. Its pathway is metabolic intermediate biosynthesis; chorismate biosynthesis; chorismate from D-erythrose 4-phosphate and phosphoenolpyruvate: step 3/7. Functionally, catalyzes a trans-dehydration via an enolate intermediate. The sequence is that of 3-dehydroquinate dehydratase from Acinetobacter baylyi (strain ATCC 33305 / BD413 / ADP1).